Consider the following 313-residue polypeptide: Pyrimidine-specific ribonucleoside hydrolase RihB (313 aa).

The Proton acceptor role is filled by Asp11. Ca(2+)-binding residues include Asp11, Asp16, and Val124. Substrate-binding residues include Gln227 and His239. Residue Asp240 participates in Ca(2+) binding.

Belongs to the IUNH family. RihB subfamily. Homotetramer. Requires Ca(2+) as cofactor.

It catalyses the reaction a pyrimidine ribonucleoside + H2O = a pyrimidine nucleobase + D-ribose. Functionally, hydrolyzes cytidine or uridine to ribose and cytosine or uracil, respectively. Has a clear preference for cytidine over uridine. Strictly specific for ribonucleosides. This chain is Pyrimidine-specific ribonucleoside hydrolase RihB, found in Shigella sonnei (strain Ss046).